The sequence spans 438 residues: tRNA(Ile)-lysidine synthase (438 aa).

26–31 (SGGADS) contributes to the ATP binding site.

This sequence belongs to the tRNA(Ile)-lysidine synthase family.

It localises to the cytoplasm. The catalysed reaction is cytidine(34) in tRNA(Ile2) + L-lysine + ATP = lysidine(34) in tRNA(Ile2) + AMP + diphosphate + H(+). Its function is as follows. Ligates lysine onto the cytidine present at position 34 of the AUA codon-specific tRNA(Ile) that contains the anticodon CAU, in an ATP-dependent manner. Cytidine is converted to lysidine, thus changing the amino acid specificity of the tRNA from methionine to isoleucine. This is tRNA(Ile)-lysidine synthase from Parabacteroides distasonis (strain ATCC 8503 / DSM 20701 / CIP 104284 / JCM 5825 / NCTC 11152).